The following is a 120-amino-acid chain: SPbeta prophage-derived uncharacterized protein YosG (120 aa).

The sequence is that of SPbeta prophage-derived uncharacterized protein YosG (yosG) from Bacillus subtilis (strain 168).